We begin with the raw amino-acid sequence, 182 residues long: ADP-ribosylation factor 1 (182 aa).

Gly2 carries the N-myristoyl glycine lipid modification. Positions Asn3 to Lys16 are important for the stable binding to the membranes. GTP is bound by residues Gly24–Thr32, Asn126–Asp129, and Ala160.

It belongs to the small GTPase superfamily. Arf family.

The protein localises to the golgi apparatus membrane. Its subcellular location is the cytoplasm. It localises to the cytosol. It carries out the reaction GTP + H2O = GDP + phosphate + H(+). With respect to regulation, alternates between an inactive GDP-bound form and an active GTP-bound form. Activated by a guanine nucleotide-exchange factor (GEF) and inactivated by GTPase-activating protein (GAP). Functionally, small GTPase involved in protein trafficking between different compartments. Modulates vesicle budding and uncoating within the Golgi complex. In its GTP-bound form, triggers the recruitment of coatomer proteins to the Golgi membrane. The hydrolysis of ARF1-bound GTP, which is mediated by ARFGAPs proteins, is required for dissociation of coat proteins from Golgi membranes and vesicles. Has a role in eye development. Required for cleavage furrow ingression in embryonic cells. The polypeptide is ADP-ribosylation factor 1 (Drosophila melanogaster (Fruit fly)).